An 824-amino-acid polypeptide reads, in one-letter code: Disintegrin and metalloproteinase domain-containing protein 8 (824 aa).

A signal peptide spans 1–16 (MRGLGLWLLGAMMLPA). At 17-655 (IAPSRPWALM…EVHAASGSLP (639 aa)) the chain is on the extracellular side. 2 N-linked (GlcNAc...) asparagine glycosylation sites follow: Asn-67 and Asn-91. A Peptidase M12B domain is found at 200-400 (RYVELYVVVD…PQSVCLANAP (201 aa)). 12 disulfide bridges follow: Cys-310–Cys-395, Cys-351–Cys-379, Cys-353–Cys-362, Cys-435–Cys-457, Cys-448–Cys-454, Cys-466–Cys-486, Cys-473–Cys-503, Cys-498–Cys-508, Cys-566–Cys-613, Cys-613–Cys-623, Cys-617–Cys-629, and Cys-631–Cys-640. His-334 is a binding site for Zn(2+). The active site involves Glu-335. Zn(2+)-binding residues include His-338 and His-344. A Disintegrin domain is found at 408-494 (GPVCGNLFVE…ECPEDAFQEN (87 aa)). The N-linked (GlcNAc...) asparagine glycan is linked to Asn-436. Residues 609-641 (RSSNCSAQCHNHGVCNHKQECHCHAGWAPPHCA) form the EGF-like domain. The N-linked (GlcNAc...) asparagine glycan is linked to Asn-612. A helical membrane pass occupies residues 656–676 (VFVVVVLVLLAVVLVTLAGII). The Cytoplasmic segment spans residues 677-824 (VYRKARSRIL…KQGAGAPTAP (148 aa)). Disordered stretches follow at residues 710 to 756 (VPAK…PVTV) and 776 to 824 (KPTF…PTAP). Residues 747–756 (RPPPAPPVTV) show a composition bias toward pro residues. A compositionally biased stretch (low complexity) spans 788 to 804 (PGAGAANPGPAEGAVGP).

As to quaternary structure, interacts with FST3. Requires Zn(2+) as cofactor. In terms of tissue distribution, expressed on neutrophils and monocytes.

It localises to the membrane. Possible involvement in extravasation of leukocytes. The protein is Disintegrin and metalloproteinase domain-containing protein 8 (ADAM8) of Homo sapiens (Human).